A 389-amino-acid chain; its full sequence is Nicotinate phosphoribosyltransferase (389 aa).

Histidine 216 carries the phosphohistidine; by autocatalysis modification.

This sequence belongs to the NAPRTase family. Post-translationally, transiently phosphorylated on a His residue during the reaction cycle. Phosphorylation strongly increases the affinity for substrates and increases the rate of nicotinate D-ribonucleotide production. Dephosphorylation regenerates the low-affinity form of the enzyme, leading to product release.

The catalysed reaction is nicotinate + 5-phospho-alpha-D-ribose 1-diphosphate + ATP + H2O = nicotinate beta-D-ribonucleotide + ADP + phosphate + diphosphate. It participates in cofactor biosynthesis; NAD(+) biosynthesis; nicotinate D-ribonucleotide from nicotinate: step 1/1. Catalyzes the synthesis of beta-nicotinate D-ribonucleotide from nicotinate and 5-phospho-D-ribose 1-phosphate at the expense of ATP. The sequence is that of Nicotinate phosphoribosyltransferase from Ralstonia pickettii (strain 12J).